The sequence spans 419 residues: Innexin-2 (419 aa).

4 helical membrane-spanning segments follow: residues 33–53 (AWFT…KQYF), 108–128 (PLVL…WNLF), 184–204 (INYF…MVLL), and 270–290 (LYIC…AGMI).

This sequence belongs to the pannexin family.

It localises to the cell membrane. Its subcellular location is the cell junction. The protein localises to the gap junction. Its function is as follows. Structural component of the gap junctions. The chain is Innexin-2 (inx-2) from Caenorhabditis elegans.